The chain runs to 91 residues: Putative pterin-4-alpha-carbinolamine dehydratase (91 aa).

The protein belongs to the pterin-4-alpha-carbinolamine dehydratase family.

The enzyme catalyses (4aS,6R)-4a-hydroxy-L-erythro-5,6,7,8-tetrahydrobiopterin = (6R)-L-erythro-6,7-dihydrobiopterin + H2O. The polypeptide is Putative pterin-4-alpha-carbinolamine dehydratase (Halobacterium salinarum (strain ATCC 29341 / DSM 671 / R1)).